Here is a 708-residue protein sequence, read N- to C-terminus: Glutamate--tRNA ligase, cytoplasmic (708 aa).

Interaction with ARC1 regions lie at residues 106–115 (NLRTFILGGL) and 141–157 (KVDV…EMDP). 205–207 (RFP) is an L-glutamate binding site. Positions 210–219 (PSGYLHIGHA) match the 'HIGH' region motif. His215 lines the ATP pocket. Position 241 (Asp241) interacts with L-glutamate. Phosphothreonine is present on Thr300. Residues 382–386 (YDFCV) and Arg400 contribute to the L-glutamate site. ATP-binding positions include Glu403 and 437-441 (LLSKR). Residues 437 to 441 (LLSKR) carry the 'KMSKS' region motif.

It belongs to the class-I aminoacyl-tRNA synthetase family. Glutamate--tRNA ligase type 2 subfamily. As to quaternary structure, component of a yeast aminoacyl-tRNA synthase (aaRS) complex formed by methionyl-tRNA synthase MES1, glutamyl-tRNA synthase GUS1 and the tRNA aminoacylation cofactor ARC1 in a stoichiometric complex. Interacts (via N-ter) with ARC1 (via N-ter). Can also form a stable binary complex with ARC1 that is functional in terms of aminoacylation. ARC1 increases the affinity for cognate tRNAs due to the presence of a tRNA binding domain in the middle and C-terminal part of ARC1.

The protein resides in the cytoplasm. It localises to the mitochondrion. It carries out the reaction tRNA(Glu) + L-glutamate + ATP = L-glutamyl-tRNA(Glu) + AMP + diphosphate. Functionally, catalyzes the attachment of glutamate to tRNA(Glu) in a two-step reaction: glutamate is first activated by ATP to form Glu-AMP and then transferred to the acceptor end of tRNA(Glu). In mitochondria, constitutes the nondiscriminating glutamyl-tRNA synthase that generates the mitochondrial mischarged glutamyl-tRNA(Gln) substrate for the tRNA-dependent amidotransferase (AdT), which generates mitochondrial glutaminyl-tRNA(Gln) by transamidation of glutamyl-tRNA(Gln). The polypeptide is Glutamate--tRNA ligase, cytoplasmic (GUS1) (Saccharomyces cerevisiae (strain ATCC 204508 / S288c) (Baker's yeast)).